A 469-amino-acid chain; its full sequence is Relaxin-3 receptor 1 (469 aa).

Topologically, residues 1-81 (MQMADAATIA…ESADTEARVR (81 aa)) are extracellular. 2 N-linked (GlcNAc...) asparagine glycosylation sites follow: Asn-36 and Asn-40. The chain crosses the membrane as a helical span at residues 82–102 (ILISVVYWVVCALGLAGNLLV). Topologically, residues 103–119 (LYLMKSMQGWRKSSINL) are cytoplasmic. Residues 120 to 140 (FVTNLALTDFQFVLTLPFWAV) traverse the membrane as a helical segment. The Extracellular portion of the chain corresponds to 141-156 (ENALDFKWPFGKAMCK). Cys-155 and Cys-247 are oxidised to a cystine. The chain crosses the membrane as a helical span at residues 157-177 (IVSMVTSMNMYASVFFLTAMS). Over 178 to 215 (VTRYHSVASALKSHRTRGHGRGDCCGRSLGDSCCFSAK) the chain is Cytoplasmic. The helical transmembrane segment at 216–236 (ALCVWIWALAALASLPSAIFS) threads the bilayer. Residues 237–270 (TTVKVMGEELCLVRFPDKLLGRDRQFWLGLYHSQ) are Extracellular-facing. The chain crosses the membrane as a helical span at residues 271–291 (KVLLGFVLPLGIIILCYLLLV). Over 292 to 329 (RFIADRRAAGTKGGAAVAGGRPTGASARRLSKVTKSVT) the chain is Cytoplasmic. The helical transmembrane segment at 330-350 (IVVLSFFLCWLPNQALTTWSI) threads the bilayer. Over 351-356 (LIKFNA) the chain is Extracellular. A helical membrane pass occupies residues 357 to 377 (VPFSQEYFLCQVYAFPVSVCL). The Cytoplasmic segment spans residues 378–469 (AHSNSCLNPV…YDLLPSSSAY (92 aa)).

It belongs to the G-protein coupled receptor 1 family. As to expression, expressed predominantly in brain regions. Highest expression in substantia nigra and pituitary, followed by hippocampus, spinal cord, amygdala, caudate nucleus and corpus callosum, quite low level in cerebellum. In peripheral tissues, relatively high levels in adrenal glands, low levels in pancreas, salivary gland, placenta, mammary gland and testis.

Its subcellular location is the cell membrane. Its function is as follows. Receptor for RNL3/relaxin-3. Binding of the ligand inhibit cAMP accumulation. This Homo sapiens (Human) protein is Relaxin-3 receptor 1 (RXFP3).